A 662-amino-acid polypeptide reads, in one-letter code: Cytochrome bo(3) ubiquinol oxidase subunit 1 (662 aa).

Residues 1–14 are Extracellular-facing; sequence MFGKLTFDAIPYHE. The chain crosses the membrane as a helical span at residues 15 to 35; sequence PIIMITYIAIILIALCIASTI. At 36-58 the chain is on the cytoplasmic side; sequence TYYKKWKYLWYEWFTTVDHKKIS. Residues 59–79 form a helical membrane-spanning segment; it reads IMYGILAFVMLFRGFVDAILM. 3 residues coordinate a ubiquinone: arginine 71, aspartate 75, and histidine 98. Residues 80-106 are Extracellular-facing; sequence RTQQVVASAGFKGFLPPHHYDQIFTAH. Histidine 106 provides a ligand contact to heme b. Residues 107–127 traverse the membrane as a helical segment; the sequence is GVIMIFFVAMPLVIGLMNLVI. Residues 128–145 lie on the Cytoplasmic side of the membrane; that stretch reads PLQIGARDVAFPFLNNLS. The helical transmembrane segment at 146 to 166 threads the bilayer; it reads FWLNVSSAVLLTLSLGIGEFA. Residues 167-189 are Extracellular-facing; the sequence is QTGWLAYPPLSGIKYSSGVGVDY. Heme b is bound at residue tryptophan 170. A helical membrane pass occupies residues 190-210; the sequence is WIWSLQISGVGTTLTGINFLV. Topologically, residues 211–232 are cytoplasmic; that stretch reads TILKMRAPGMSFFKMPVFTWTS. A helical transmembrane segment spans residues 233–253; the sequence is LCTNILIVISFPVLTVTLVLL. Residues 254-277 are Extracellular-facing; it reads TLDRYFNFHFFTNDLGGNAMMYVN. Residues 278 to 298 form a helical membrane-spanning segment; the sequence is LIWIWGHPEVYILVLPVFGVF. Histidine 284 lines the Cu(2+) pocket. A cross-link (1'-histidyl-3'-tyrosine (His-Tyr)) is located at residues 284–288; it reads HPEVY. Fe(II)-heme o is bound at residue tyrosine 288. The Cytoplasmic portion of the chain corresponds to 299–309; the sequence is SEVVATFSKKR. A helical transmembrane segment spans residues 310 to 330; it reads LFGYVSLVWATLSITILSFIV. The Extracellular segment spans residues 331 to 346; the sequence is WLHHFFTMGAGADVNT. Residues histidine 333 and histidine 334 each coordinate Cu(2+). Residues 347–367 traverse the membrane as a helical segment; it reads FFGITTMIIAIPTGVKIFNWL. Residues 368 to 380 are Cytoplasmic-facing; it reads FTIYQGRVHMHSS. Residues 381 to 401 traverse the membrane as a helical segment; it reads ILWTLGFLVTFSIGGMTGVLL. The Extracellular segment spans residues 402-413; that stretch reads SVPPADFVLHNS. Fe(II)-heme o-binding residues include histidine 411 and histidine 419. The helical transmembrane segment at 414–434 threads the bilayer; that stretch reads LFLVAHFHNVIIGGVVFGCFA. Heme b is bound at residue histidine 421. The Cytoplasmic portion of the chain corresponds to 435 to 456; sequence GINYWFPKLFGFVLNEIWGKRA. The helical transmembrane segment at 457–477 threads the bilayer; the sequence is FWFWIIGFFLAFIPLYFLGLM. Residues 478-493 are Extracellular-facing; that stretch reads GMTRRLSQNIDSEFHM. Heme b-binding residues include arginine 481 and arginine 482. Residues 494–514 form a helical membrane-spanning segment; the sequence is LLCIAAIGACFIGIGIICQVI. Residues 515–586 lie on the Cytoplasmic side of the membrane; it reads QFFISIKERR…INSINYHDIH (72 aa). The chain crosses the membrane as a helical span at residues 587–607; that stretch reads MPKNTGLGFMISIFSLFFGFS. A topological domain (extracellular) is located at residue alanine 608. A helical transmembrane segment spans residues 609–629; it reads VWHITWLCILSFLAIIISLFI. Topologically, residues 630–662 are cytoplasmic; the sequence is NSLNEDTEYTISAEEIKKIEHQYWKNIQKAGLK.

Belongs to the heme-copper respiratory oxidase family. The cytochrome bo(3) ubiquinol oxidase complex is a heterooctamer of two A chains, two B chains, two C chains and two D chains. The cofactor is Cu(2+). Requires heme b as cofactor. Fe(II)-heme o is required as a cofactor.

The protein resides in the cell membrane. It catalyses the reaction 2 a ubiquinol + O2 + n H(+)(in) = 2 a ubiquinone + 2 H2O + n H(+)(out). In terms of biological role, cytochrome bo(3) ubiquinol oxidase is the terminal enzyme in the aerobic respiratory chain. Catalyzes the four-electron reduction of O2 to water, using a ubiquinol as a membrane soluble electron donor for molecular oxygen reduction. Has proton pump activity across the membrane in addition to electron transfer, pumping 2 protons/electron and generating a proton motive force. All the redox centers of this enzyme complex are located within the largest subunit, subunit I. Protons are probably pumped via D- and K- channels found in this subunit. In Buchnera aphidicola subsp. Acyrthosiphon pisum (strain APS) (Acyrthosiphon pisum symbiotic bacterium), this protein is Cytochrome bo(3) ubiquinol oxidase subunit 1 (cyoB).